Consider the following 315-residue polypeptide: Long form salivary protein D7L1 (315 aa).

A signal peptide spans 1-18 (MIIVAVLLSFLAHLLVQA). 2 disulfide bridges follow: Cys37–Cys73 and Cys69–Cys128. Trp55 contributes to the thromboxane A2 binding site. Trp58 contacts leukotriene C4. Residue Tyr70 participates in thromboxane A2 binding. Leukotriene C4 contacts are provided by Gly152 and Lys170. Residue Lys170 participates in thromboxane A2 binding. Intrachain disulfides connect Cys178–Cys211 and Cys252–Cys263.

The protein belongs to the PBP/GOBP family. As to expression, distal-lateral and median lobes of female salivary gland (at protein level). Not detected in male salivary gland (at protein level). Expressed in female salivary gland. Not detected in female carcass without salivary glands. Expressed in male salivary gland and other tissues.

The protein resides in the secreted. In terms of biological role, modulates blood feeding of female mosquitoes on vertebrate species by binding and sequestering different mediators involved in the host response. Binds leukotriene C4, leukotriene D4, leukotriene E4 and stable analogs of thromboxane A2, U-46619 and carbocyclic TXA2. Binds weakly prostaglandins: PGD2, PGE2 and PGF2alpha. Does not bind leukotriene B4, biogenic amines, ADP, platelet activating phospholipid derivative PAF and arachidonic acid. Inhibits agonist-induced smooth muscle contraction. Inhibits platelet aggregation induced by low concentrations of collagen in thromboxane A2-dependent manner. In Anopheles stephensi (Indo-Pakistan malaria mosquito), this protein is Long form salivary protein D7L1.